The chain runs to 274 residues: NADH-ubiquinone oxidoreductase chain 2 (274 aa).

Helical transmembrane passes span 28–48, 54–74, 79–99, 107–127, 128–148, 171–191, 206–226, and 254–274; these read MIIM…FWFP, LTWM…LMLI, IKYL…IGGL, LMAF…MISE, SIWL…TFMF, FTLF…GFLP, FLLL…LRIC, and LIMT…YFMF.

The protein belongs to the complex I subunit 2 family.

The protein localises to the mitochondrion inner membrane. It carries out the reaction a ubiquinone + NADH + 5 H(+)(in) = a ubiquinol + NAD(+) + 4 H(+)(out). In terms of biological role, core subunit of the mitochondrial membrane respiratory chain NADH dehydrogenase (Complex I) that is believed to belong to the minimal assembly required for catalysis. Complex I functions in the transfer of electrons from NADH to the respiratory chain. The immediate electron acceptor for the enzyme is believed to be ubiquinone. The polypeptide is NADH-ubiquinone oxidoreductase chain 2 (mt:ND2) (Drosophila mauritiana (Fruit fly)).